Reading from the N-terminus, the 304-residue chain is Probable aspartoacylase (304 aa).

Residues His-13 and Glu-16 each coordinate Zn(2+). Residues Arg-55 and 62 to 63 (NR) contribute to the substrate site. Residue His-104 coordinates Zn(2+). Substrate-binding residues include Glu-162 and Tyr-272.

It belongs to the AspA/AstE family. Aspartoacylase subfamily. Zn(2+) is required as a cofactor.

The enzyme catalyses an N-acyl-L-aspartate + H2O = a carboxylate + L-aspartate. The chain is Probable aspartoacylase from Synechococcus sp. (strain CC9605).